The sequence spans 278 residues: Large ribosomal subunit protein uL2 (278 aa).

The interval 225 to 278 is disordered; the sequence is MNPVDHPHGGGEGRTSGGRHPVTPWGKPTKGKKTRANKATDKYIVRSRHQKKKG. Positions 269-278 are enriched in basic residues; sequence VRSRHQKKKG.

This sequence belongs to the universal ribosomal protein uL2 family. As to quaternary structure, part of the 50S ribosomal subunit. Forms a bridge to the 30S subunit in the 70S ribosome.

Functionally, one of the primary rRNA binding proteins. Required for association of the 30S and 50S subunits to form the 70S ribosome, for tRNA binding and peptide bond formation. It has been suggested to have peptidyltransferase activity; this is somewhat controversial. Makes several contacts with the 16S rRNA in the 70S ribosome. The chain is Large ribosomal subunit protein uL2 from Parvibaculum lavamentivorans (strain DS-1 / DSM 13023 / NCIMB 13966).